We begin with the raw amino-acid sequence, 508 residues long: Aldehyde dehydrogenase family 7 member A1 (508 aa).

244–249 contacts NAD(+); the sequence is GSSKVG. The active-site Proton acceptor is glutamate 266. Cysteine 300 (nucleophile) is an active-site residue.

It belongs to the aldehyde dehydrogenase family. As to quaternary structure, homotetramer.

It catalyses the reaction an aldehyde + NAD(+) + H2O = a carboxylate + NADH + 2 H(+). This chain is Aldehyde dehydrogenase family 7 member A1, found in Pisum sativum (Garden pea).